A 302-amino-acid chain; its full sequence is MLNQLNQLTTEASNPASAQIDSLSALQIVQLINQQDALVAAAVNTQAEMIAEAVDVIADRFRSNGRLIYLGAGTSGRLGVLDASECPPTFRTPPEMVVGVIAGGPEALTRAIEGAEDHPEFAERDLAKINLSSNDVLVGIATSGRTPYVIGGLKYARSIGAFTIGLSCNPNCQLRPLSQIMIAPIVGPEIVSGSTRMKAGTATKMVLNMLTTGAMIRIGKTYGNRMVDVRATNEKLVARSRQMLSEIVGISGDQAEQLLQQCDGEVKTAIVVHIKEVSPQTARQMLVDVDGHLSRLLATPSE.

In terms of domain architecture, SIS spans I57–K220. E85 (proton donor) is an active-site residue. E116 is an active-site residue.

The protein belongs to the GCKR-like family. MurNAc-6-P etherase subfamily. Homodimer.

It catalyses the reaction N-acetyl-D-muramate 6-phosphate + H2O = N-acetyl-D-glucosamine 6-phosphate + (R)-lactate. The protein operates within amino-sugar metabolism; N-acetylmuramate degradation. Functionally, specifically catalyzes the cleavage of the D-lactyl ether substituent of MurNAc 6-phosphate, producing GlcNAc 6-phosphate and D-lactate. The sequence is that of N-acetylmuramic acid 6-phosphate etherase from Rhodopirellula baltica (strain DSM 10527 / NCIMB 13988 / SH1).